The sequence spans 89 residues: Acylphosphatase (89 aa).

In terms of domain architecture, Acylphosphatase-like spans 3–89 (ALFIKISGRV…QNFTSFDIVP (87 aa)). Active-site residues include Arg18 and Asn36.

This sequence belongs to the acylphosphatase family.

The enzyme catalyses an acyl phosphate + H2O = a carboxylate + phosphate + H(+). The protein is Acylphosphatase (acyP) of Pseudothermotoga lettingae (strain ATCC BAA-301 / DSM 14385 / NBRC 107922 / TMO) (Thermotoga lettingae).